Here is a 616-residue protein sequence, read N- to C-terminus: MPKYRSATTTHGRNMAGARALWRATGMTDADFGKPIIAVVNSFTQFVPGHVHLRDLGKLVAEQIEAAGGVAKEFNTIAVDDGIAMGHGGMLYSLPSRELIADSVEYMVNAHCADAMVCISNCDKITPGMLMASLRLNIPVIFVSGGPMEAGKTKLSEQIIKLDLVDAMIQGADPKVSDSQSDQVERSACPTCGSCSGMFTANSMNCLTEALGLSQPGNGSLLATHADRKQLFLNAGKRIVELTKRYYEQNDESALPRNIASKAAFENAMTLDIAMGGSTNTVLHLLAAAQEAEIDFTMSDIDKLSRKVPQLCKVAPSTQKYHMEDVHRAGGVIGILGELDRAGLLNRDVKNVLGLTLPQTLEQYDVMLTQDDAVKNMFRAGPAGIRTTQAFSQDCRWDSLDDDRANGCIRSLEHAYSKDGGLAVLYGNFAENGCIVKTAGVDDSILKFTGPAKVYESQDDAVEAILGGKVVAGDVVVIRYEGPKGGPGMQEMLYPTSFLKSMGLGKACALITDGRFSGGTSGLSIGHVSPEAASGGSIGLIEDGDLIAIDIPNRGIQLQVSDAELAARREAQEARGDKAWTPKNRERQVSFALRAYASLATSADKGAVRDKSKLGG.

Asp81 provides a ligand contact to Mg(2+). Cys122 provides a ligand contact to [2Fe-2S] cluster. The Mg(2+) site is built by Asp123 and Lys124. At Lys124 the chain carries N6-carboxylysine. Cys195 provides a ligand contact to [2Fe-2S] cluster. A Mg(2+)-binding site is contributed by Glu491. Ser517 acts as the Proton acceptor in catalysis.

The protein belongs to the IlvD/Edd family. As to quaternary structure, homodimer. Requires [2Fe-2S] cluster as cofactor. It depends on Mg(2+) as a cofactor.

The enzyme catalyses (2R)-2,3-dihydroxy-3-methylbutanoate = 3-methyl-2-oxobutanoate + H2O. It carries out the reaction (2R,3R)-2,3-dihydroxy-3-methylpentanoate = (S)-3-methyl-2-oxopentanoate + H2O. It participates in amino-acid biosynthesis; L-isoleucine biosynthesis; L-isoleucine from 2-oxobutanoate: step 3/4. Its pathway is amino-acid biosynthesis; L-valine biosynthesis; L-valine from pyruvate: step 3/4. Functionally, functions in the biosynthesis of branched-chain amino acids. Catalyzes the dehydration of (2R,3R)-2,3-dihydroxy-3-methylpentanoate (2,3-dihydroxy-3-methylvalerate) into 2-oxo-3-methylpentanoate (2-oxo-3-methylvalerate) and of (2R)-2,3-dihydroxy-3-methylbutanoate (2,3-dihydroxyisovalerate) into 2-oxo-3-methylbutanoate (2-oxoisovalerate), the penultimate precursor to L-isoleucine and L-valine, respectively. In Shigella sonnei (strain Ss046), this protein is Dihydroxy-acid dehydratase.